The primary structure comprises 355 residues: UDP-N-acetylglucosamine--N-acetylmuramyl-(pentapeptide) pyrophosphoryl-undecaprenol N-acetylglucosamine transferase (355 aa).

Residues T14–G16, N126, R162, S190, I243, A262–E267, and Q287 contribute to the UDP-N-acetyl-alpha-D-glucosamine site.

The protein belongs to the glycosyltransferase 28 family. MurG subfamily.

It is found in the cell inner membrane. The enzyme catalyses di-trans,octa-cis-undecaprenyl diphospho-N-acetyl-alpha-D-muramoyl-L-alanyl-D-glutamyl-meso-2,6-diaminopimeloyl-D-alanyl-D-alanine + UDP-N-acetyl-alpha-D-glucosamine = di-trans,octa-cis-undecaprenyl diphospho-[N-acetyl-alpha-D-glucosaminyl-(1-&gt;4)]-N-acetyl-alpha-D-muramoyl-L-alanyl-D-glutamyl-meso-2,6-diaminopimeloyl-D-alanyl-D-alanine + UDP + H(+). It participates in cell wall biogenesis; peptidoglycan biosynthesis. Cell wall formation. Catalyzes the transfer of a GlcNAc subunit on undecaprenyl-pyrophosphoryl-MurNAc-pentapeptide (lipid intermediate I) to form undecaprenyl-pyrophosphoryl-MurNAc-(pentapeptide)GlcNAc (lipid intermediate II). The sequence is that of UDP-N-acetylglucosamine--N-acetylmuramyl-(pentapeptide) pyrophosphoryl-undecaprenol N-acetylglucosamine transferase from Vibrio campbellii (strain ATCC BAA-1116).